A 439-amino-acid chain; its full sequence is Acetyl esterase Axe7A (439 aa).

The first 31 residues, 1–31 (MFNFAPKQTTEMKKLLFTLVFVLGSMATALA), serve as a signal peptide directing secretion. Ser-309 acts as the Nucleophile in catalysis. Catalysis depends on charge relay system residues Asp-391 and His-420.

Belongs to the carbohydrate esterase 7 family.

It functions in the pathway glycan degradation; xylan degradation. Functionally, involved in degradation of plant cell wall polysaccharides. Has acetyl esterase activity towards a broad range of substrates including xylose-tetraacetate, 4-O-methylumbelliferyl acetate, glucose-pentaacetate, cephalosporin C, and acetylated xylo-oligosaccharides smaller than xylo-heptaose. Displays no detectable activity on polymeric acetylated xylan. This chain is Acetyl esterase Axe7A, found in Xylanibacter ruminicola (strain ATCC 19189 / DSM 19721 / CIP 105475 / JCM 8958 / 23) (Prevotella ruminicola).